The sequence spans 517 residues: T-complex protein 11-like protein 2 (517 aa).

A disordered region spans residues 1 to 59 (MPFNGEKQYVNEDQQSDSESSRFSESTASLSDYGCSRQSFTSDSSSKSSSPASTSPPRG). S16 bears the Phosphoserine mark. Over residues 17–55 (DSESSRFSESTASLSDYGCSRQSFTSDSSSKSSSPASTS) the composition is skewed to low complexity.

This sequence belongs to the TCP11 family. Interacts with FMNL2; this interaction promotes muscle-derived satellite cell (MDSC) migration and differentiation.

Its subcellular location is the cytoplasm. It localises to the cytoskeleton. Functionally, promotes the migration of muscle-derived satellite cells (MDSCs) during differentiation throught interaction with FMNL2 and therefore may participate in microfilament assembly. The protein is T-complex protein 11-like protein 2 of Rattus norvegicus (Rat).